A 279-amino-acid polypeptide reads, in one-letter code: Elongation factor Ts (279 aa).

The involved in Mg(2+) ion dislocation from EF-Tu stretch occupies residues 80 to 83 (TDFV).

It belongs to the EF-Ts family.

It localises to the cytoplasm. Functionally, associates with the EF-Tu.GDP complex and induces the exchange of GDP to GTP. It remains bound to the aminoacyl-tRNA.EF-Tu.GTP complex up to the GTP hydrolysis stage on the ribosome. In Borreliella burgdorferi (strain ZS7) (Borrelia burgdorferi), this protein is Elongation factor Ts.